A 77-amino-acid chain; its full sequence is Translation initiation factor IF-1, chloroplastic (77 aa).

The region spanning 1–71 (MKEQKWIHEG…TRGRIIYRLR (71 aa)) is the S1-like domain.

It belongs to the IF-1 family. In terms of assembly, component of the 30S ribosomal translation pre-initiation complex which assembles on the 30S ribosome in the order IF-2 and IF-3, IF-1 and N-formylmethionyl-tRNA(fMet); mRNA recruitment can occur at any time during PIC assembly.

The protein resides in the plastid. The protein localises to the chloroplast. Functionally, one of the essential components for the initiation of protein synthesis. Stabilizes the binding of IF-2 and IF-3 on the 30S subunit to which N-formylmethionyl-tRNA(fMet) subsequently binds. Helps modulate mRNA selection, yielding the 30S pre-initiation complex (PIC). Upon addition of the 50S ribosomal subunit IF-1, IF-2 and IF-3 are released leaving the mature 70S translation initiation complex. This is Translation initiation factor IF-1, chloroplastic from Antirrhinum majus (Garden snapdragon).